Reading from the N-terminus, the 136-residue chain is Large ribosomal subunit protein uL16 (136 aa).

Belongs to the universal ribosomal protein uL16 family. As to quaternary structure, part of the 50S ribosomal subunit.

Binds 23S rRNA and is also seen to make contacts with the A and possibly P site tRNAs. The polypeptide is Large ribosomal subunit protein uL16 (Rickettsia peacockii (strain Rustic)).